A 155-amino-acid chain; its full sequence is Large-conductance mechanosensitive channel (155 aa).

2 helical membrane passes run 25-45 (VLDL…VTSL) and 98-118 (GDFI…FLIV).

It belongs to the MscL family. Homopentamer.

The protein resides in the cell inner membrane. In terms of biological role, channel that opens in response to stretch forces in the membrane lipid bilayer. May participate in the regulation of osmotic pressure changes within the cell. In Novosphingobium aromaticivorans (strain ATCC 700278 / DSM 12444 / CCUG 56034 / CIP 105152 / NBRC 16084 / F199), this protein is Large-conductance mechanosensitive channel.